Consider the following 213-residue polypeptide: A-type ATP synthase subunit D (213 aa).

Belongs to the V-ATPase D subunit family. In terms of assembly, has multiple subunits with at least A(3), B(3), C, D, E, F, H, I and proteolipid K(x).

It is found in the cell membrane. Functionally, component of the A-type ATP synthase that produces ATP from ADP in the presence of a proton gradient across the membrane. This chain is A-type ATP synthase subunit D, found in Thermoplasma acidophilum (strain ATCC 25905 / DSM 1728 / JCM 9062 / NBRC 15155 / AMRC-C165).